The following is a 348-amino-acid chain: Fe-S cluster assembly protein DRE2 (348 aa).

The tract at residues 1–162 (MSQYKTGLLL…KKASSSTSNL (162 aa)) is N-terminal SAM-like domain. Positions 137–170 (KTNNTKLQSGSKLPTFKKASSSTSNLPSFKKADH) are disordered. Residues 144 to 163 (QSGSKLPTFKKASSSTSNLP) show a composition bias toward polar residues. Residues 163 to 242 (PSFKKADHSR…EEELIDEDGS (80 aa)) form a linker region. The residue at position 206 (S206) is a Phosphoserine. 4 residues coordinate [2Fe-2S] cluster: C252, C263, C266, and C268. The tract at residues 252 to 268 (CGKSKTKKKKACKDCTC) is fe-S binding site A. The [4Fe-4S] cluster site is built by C311, C314, C322, and C325. 2 consecutive short sequence motifs (cx2C motif) follow at residues 311–314 (CGSC) and 322–325 (CSGC). The tract at residues 311 to 325 (CGSCSLGDAFRCSGC) is fe-S binding site B.

The protein belongs to the anamorsin family. In terms of assembly, monomer. Interacts with TAH18. Interacts with MIA40. The cofactor is [2Fe-2S] cluster. It depends on [4Fe-4S] cluster as a cofactor.

Its subcellular location is the cytoplasm. The protein resides in the mitochondrion intermembrane space. Its function is as follows. Component of the cytosolic iron-sulfur (Fe-S) protein assembly (CIA) machinery required for the maturation of extramitochondrial Fe-S proteins. Part of an electron transfer chain functioning in an early step of cytosolic Fe-S biogenesis, facilitating the de novo assembly of a [4Fe-4S] cluster on the scaffold complex CFD1-NBP35. Electrons are transferred to DRE2 from NADPH via the FAD- and FMN-containing protein TAH18. TAH18-DRE2 are also required for the assembly of the diferric tyrosyl radical cofactor of ribonucleotide reductase (RNR), probably by providing electrons for reduction during radical cofactor maturation in the catalytic small subunit RNR2. This is Fe-S cluster assembly protein DRE2 from Saccharomyces cerevisiae (strain Lalvin EC1118 / Prise de mousse) (Baker's yeast).